The chain runs to 20 residues: DELTA-actitoxin-Afr1b (20 aa).

It belongs to the actinoporin family. Sea anemone subfamily. As to quaternary structure, octamer or nonamer in membranes. Monomer in the soluble state.

Its subcellular location is the secreted. It localises to the nematocyst. It is found in the target cell membrane. Functionally, pore-forming toxin (PFT) that consists of a crown-shaped octamer or nonamer that forms cation-selective hydrophilic pores of about 1.5 nm (inside) and 13 nm (outside) and causes cytolysis. It causes cardiac stimulation. Also causes hemolysis (HC(50)=0.4 nM). Interestingly, the Phe-16 is crucial for hemolysis. Pore formation is a multi-step process that involves specific recognition of membrane sphingomyelin (but neither cholesterol nor phosphatidylcholine) using aromatic rich region and adjacent phosphocholine (POC) binding site, firm binding to the membrane (mainly driven by hydrophobic interactions) accompanied by the transfer of the N-terminal region to the lipid-water interface and finally pore formation after oligomerization of monomers. It is probable that a dimeric form is an assembly intermediate before the complete oligomerization. The formation of stable pores occurs only in vesicles composed of DOPC/SM (there is no oligomerization when the PFT is treated with vesicles of DOPC or SM alone). The transmembrane pore displays 8 lateral perforations, one at each subunit-subunit interface, partially occupied by the acyl-chain region of a bridging lipid. Each pore contains 24 lipid molecules, firmly bound to each subunit, that is, 3 lipids (L1, L2, L3, L4 and/or L5) are associated to each subunit. Lipid L1 bridges 2 subunits, whereas lipids L2 and L3 bind to sites at single subunit. The sequence is that of DELTA-actitoxin-Afr1b from Actinia fragacea (Strawberry anemone).